We begin with the raw amino-acid sequence, 215 residues long: Programmed cell death protein 10 homolog (215 aa).

The protein belongs to the PDCD10 family. As to quaternary structure, interacts with gck-1. Expressed in pharynx, intestine, germline, vulva and excretory canals.

The protein resides in the cytoplasm. It is found in the apical cell membrane. Its function is as follows. Involved in excretory canal elongation during postembryonic development. Plays a role in promoting Golgi stability, ER integrity and vesicle transport probably by regulating the activation of Rho GTPase cdc-42. Involved in fertility. The sequence is that of Programmed cell death protein 10 homolog from Caenorhabditis elegans.